A 684-amino-acid chain; its full sequence is Proprotein convertase subtilisin/kexin type 9 (684 aa).

The N-terminal stretch at 1-28 is a signal peptide; it reads MGTVSSRRLWWPLPLLLLLLLGPPGARA. A propeptide spanning residues 29-151 is cleaved from the precursor; sequence QEDDDGDYEE…IEEDSSVFAQ (123 aa). A Sulfotyrosine modification is found at Tyr-36. Ser-45 carries the post-translational modification Phosphoserine. The 74-residue stretch at 75 to 148 folds into the Inhibitor I9 domain; that stretch reads TYVVVLKDSD…VDYIEEDSSV (74 aa). One can recognise a Peptidase S8 domain in the interval 154-460; it reads PWNLERITPA…GWQLFCRTVW (307 aa). Active-site charge relay system residues include Asp-185 and His-225. 2 disulfide bridges follow: Cys-222-Cys-254 and Cys-322-Cys-357. Ser-385 functions as the Charge relay system in the catalytic mechanism. Residues 451–684 form a C-terminal domain region; that stretch reads GWQLFCRTVW…AICCRSRHLA (234 aa). Intrachain disulfides connect Cys-456-Cys-526, Cys-476-Cys-525, and Cys-485-Cys-508. The N-linked (GlcNAc...) asparagine glycan is linked to Asn-532. Cystine bridges form between Cys-533/Cys-600, Cys-551/Cys-599, Cys-561/Cys-587, Cys-607/Cys-678, Cys-625/Cys-677, and Cys-634/Cys-653.

The protein belongs to the peptidase S8 family. Monomer. Can self-associate to form dimers and higher multimers which may have increased LDLR degrading activity. The precursor protein but not the mature protein may form multimers. Interacts with APOB, VLDLR, LRP8/APOER2 and BACE1. The full-length immature form (pro-PCSK9) interacts with SCNN1A, SCNN1B and SCNN1G. The pro-PCSK9 form (via C-terminal domain) interacts with LDLR. Interacts (via the C-terminal domain) with ANXA2 (via repeat Annexin 1); the interaction inhibits the degradation of LDLR. It depends on Ca(2+) as a cofactor. Post-translationally, cleavage by furin and PCSK5 generates a truncated inactive protein that is unable to induce LDLR degradation. Undergoes autocatalytic cleavage in the endoplasmic reticulum to release the propeptide from the N-terminus and the cleavage of the propeptide is strictly required for its maturation and activation. The cleaved propeptide however remains associated with the catalytic domain through non-covalent interactions, preventing potential substrates from accessing its active site. As a result, it is secreted from cells as a propeptide-containing, enzymatically inactive protein. In terms of processing, phosphorylation protects the propeptide against proteolysis.

The protein resides in the cytoplasm. It is found in the secreted. The protein localises to the endosome. It localises to the lysosome. Its subcellular location is the cell surface. The protein resides in the endoplasmic reticulum. It is found in the golgi apparatus. Its proteolytic activity is autoinhibited by the non-covalent binding of the propeptide to the catalytic domain. Inhibited by EGTA. Its function is as follows. Crucial player in the regulation of plasma cholesterol homeostasis. Binds to low-density lipid receptor family members: low density lipoprotein receptor (LDLR), very low density lipoprotein receptor (VLDLR), apolipoprotein E receptor (LRP1/APOER) and apolipoprotein receptor 2 (LRP8/APOER2), and promotes their degradation in intracellular acidic compartments. Acts via a non-proteolytic mechanism to enhance the degradation of the hepatic LDLR through a clathrin LDLRAP1/ARH-mediated pathway. May prevent the recycling of LDLR from endosomes to the cell surface or direct it to lysosomes for degradation. Can induce ubiquitination of LDLR leading to its subsequent degradation. Inhibits intracellular degradation of APOB via the autophagosome/lysosome pathway in a LDLR-independent manner. Involved in the disposal of non-acetylated intermediates of BACE1 in the early secretory pathway. Inhibits epithelial Na(+) channel (ENaC)-mediated Na(+) absorption by reducing ENaC surface expression primarily by increasing its proteasomal degradation. Regulates neuronal apoptosis via modulation of LRP8/APOER2 levels and related anti-apoptotic signaling pathways. This chain is Proprotein convertase subtilisin/kexin type 9 (PCSK9), found in Plecturocebus moloch (Dusky titi monkey).